We begin with the raw amino-acid sequence, 82 residues long: Small ribosomal subunit protein bS18 (82 aa).

Residues 1–20 (MVDINQIPTRRPFHRRRKTC) are disordered.

Belongs to the bacterial ribosomal protein bS18 family. Part of the 30S ribosomal subunit. Forms a tight heterodimer with protein bS6.

Its function is as follows. Binds as a heterodimer with protein bS6 to the central domain of the 16S rRNA, where it helps stabilize the platform of the 30S subunit. The polypeptide is Small ribosomal subunit protein bS18 (Brucella anthropi (strain ATCC 49188 / DSM 6882 / CCUG 24695 / JCM 21032 / LMG 3331 / NBRC 15819 / NCTC 12168 / Alc 37) (Ochrobactrum anthropi)).